The sequence spans 224 residues: Cytidylate kinase (224 aa).

Position 11 to 19 (11 to 19) interacts with ATP; the sequence is GPAAAGKST.

The protein belongs to the cytidylate kinase family. Type 1 subfamily.

It localises to the cytoplasm. It carries out the reaction CMP + ATP = CDP + ADP. It catalyses the reaction dCMP + ATP = dCDP + ADP. In Listeria innocua serovar 6a (strain ATCC BAA-680 / CLIP 11262), this protein is Cytidylate kinase.